Reading from the N-terminus, the 391-residue chain is Acridone synthase 2 (391 aa).

Residue Cys164 is part of the active site.

The protein belongs to the thiolase-like superfamily. Chalcone/stilbene synthases family. In terms of assembly, homodimer.

It catalyses the reaction N-methylanthraniloyl-CoA + 3 malonyl-CoA + 3 H(+) = 1,3-dihydroxy-N-methylacridone + 3 CO2 + 4 CoA + H2O. The chain is Acridone synthase 2 (ACS2) from Ruta graveolens (Common rue).